A 390-amino-acid polypeptide reads, in one-letter code: ATP-sensitive inward rectifier potassium channel 11 (390 aa).

Residues 1-65 (MLSRKGIIPE…LQDVFTTLVD (65 aa)) lie on the Cytoplasmic side of the membrane. ATP-binding residues include Asn-48 and Arg-50. A helical membrane pass occupies residues 66-92 (LKWPHTLLIFTMSFLCSWLLFAMVWWL). The Extracellular segment spans residues 93–116 (IAFAHGDLAPGEGTTVPCVTSIHS). A disulfide bond links Cys-110 and Cys-142. The segment at residues 117–133 (FSSAFLFSIEVQVTIGF) is an intramembrane region (discontinuously helical; Pore-forming). Residues Thr-130 and Phe-133 each coordinate K(+). A Selectivity filter motif is present at residues 130–135 (TIGFGG). Residues 134–142 (GGRMVTEEC) are Extracellular-facing. Residues 143–171 (PLAILILIVQNIVGLMINAIMLGCIFMKT) form a helical membrane-spanning segment. Topologically, residues 172–390 (SQAHRRAETL…RFSISPDSLS (219 aa)) are cytoplasmic. Arg-176 lines the a 1,2-diacyl-sn-glycero-3-phospho-(1D-myo-inositol-4,5-bisphosphate) pocket. Tyr-330 serves as a coordination point for ATP. Thr-341 carries the post-translational modification Phosphothreonine; by MAPK1. Residue Ser-385 is modified to Phosphoserine; by MAPK1.

The protein belongs to the inward rectifier-type potassium channel (TC 1.A.2.1) family. KCNJ11 subfamily. In terms of assembly, homotetramer; the homotetramer binds four ATP molecules (one ATP per subunit). Forms an heterooctamer with ABCC8/SUR1; one KCNJ11 homotetramer interacts with four ABCC8/SUR1 molecules. Interacts with ABCC9/SUR2. Post-translationally, phosphorylation by MAPK1 results in changes in channel gating that destabilize the closed states and reduce the ATP sensitivity.

It is found in the membrane. It catalyses the reaction K(+)(in) = K(+)(out). With respect to regulation, KATP channels are regulated by cytoplasmic ATP/ADP ratios; ATP inhibits the channel by closing the pore, while ADP activates the channel. Activated by phosphatidylinositol 4,5-biphosphate (PtdIns(4,5)P2). Its function is as follows. Inward rectifier potassium channel that forms the pore of ATP-sensitive potassium channels (KATP), regulating potassium permeability as a function of cytoplasmic ATP and ADP concentrations in many different cells. Inward rectifier potassium channels are characterized by a greater tendency to allow potassium to flow into the cell rather than out of it. Their voltage dependence is regulated by the concentration of extracellular potassium; as external potassium is raised, the voltage range of the channel opening shifts to more positive voltages. The inward rectification is mainly due to the blockage of outward current by internal magnesium. Can be blocked by extracellular barium. In pancreatic cells, it forms KATP channels with ABCC8/SUR1. Can form cardiac and smooth muscle-type KATP channels with ABCC9. The protein is ATP-sensitive inward rectifier potassium channel 11 (KCNJ11) of Cavia porcellus (Guinea pig).